The primary structure comprises 218 residues: GTP cyclohydrolase 1 (218 aa).

Zn(2+) contacts are provided by C109, H112, and C180.

The protein belongs to the GTP cyclohydrolase I family. Toroid-shaped homodecamer, composed of two pentamers of five dimers.

The enzyme catalyses GTP + H2O = 7,8-dihydroneopterin 3'-triphosphate + formate + H(+). Its pathway is cofactor biosynthesis; 7,8-dihydroneopterin triphosphate biosynthesis; 7,8-dihydroneopterin triphosphate from GTP: step 1/1. The polypeptide is GTP cyclohydrolase 1 (Haemophilus influenzae (strain 86-028NP)).